The primary structure comprises 185 residues: Ribosome-recycling factor (185 aa).

This sequence belongs to the RRF family.

The protein localises to the cytoplasm. Responsible for the release of ribosomes from messenger RNA at the termination of protein biosynthesis. May increase the efficiency of translation by recycling ribosomes from one round of translation to another. This is Ribosome-recycling factor from Trichlorobacter lovleyi (strain ATCC BAA-1151 / DSM 17278 / SZ) (Geobacter lovleyi).